The chain runs to 616 residues: Chaperone protein HscA (616 aa).

It belongs to the heat shock protein 70 family.

In terms of biological role, chaperone involved in the maturation of iron-sulfur cluster-containing proteins. Has a low intrinsic ATPase activity which is markedly stimulated by HscB. Involved in the maturation of IscU. The protein is Chaperone protein HscA of Photorhabdus laumondii subsp. laumondii (strain DSM 15139 / CIP 105565 / TT01) (Photorhabdus luminescens subsp. laumondii).